Consider the following 268-residue polypeptide: Ribosomal RNA small subunit methyltransferase A (268 aa).

The S-adenosyl-L-methionine site is built by Asn-18, Leu-20, Gly-45, Glu-66, Asp-91, and Asn-112.

Belongs to the class I-like SAM-binding methyltransferase superfamily. rRNA adenine N(6)-methyltransferase family. RsmA subfamily.

Its subcellular location is the cytoplasm. The enzyme catalyses adenosine(1518)/adenosine(1519) in 16S rRNA + 4 S-adenosyl-L-methionine = N(6)-dimethyladenosine(1518)/N(6)-dimethyladenosine(1519) in 16S rRNA + 4 S-adenosyl-L-homocysteine + 4 H(+). In terms of biological role, specifically dimethylates two adjacent adenosines (A1518 and A1519) in the loop of a conserved hairpin near the 3'-end of 16S rRNA in the 30S particle. May play a critical role in biogenesis of 30S subunits. The sequence is that of Ribosomal RNA small subunit methyltransferase A from Vibrio vulnificus (strain CMCP6).